The chain runs to 88 residues: Small ribosomal subunit protein uS15 (88 aa).

This sequence belongs to the universal ribosomal protein uS15 family. As to quaternary structure, part of the 30S ribosomal subunit. Forms a bridge to the 50S subunit in the 70S ribosome, contacting the 23S rRNA.

Functionally, one of the primary rRNA binding proteins, it binds directly to 16S rRNA where it helps nucleate assembly of the platform of the 30S subunit by binding and bridging several RNA helices of the 16S rRNA. In terms of biological role, forms an intersubunit bridge (bridge B4) with the 23S rRNA of the 50S subunit in the ribosome. This chain is Small ribosomal subunit protein uS15, found in Borrelia hermsii (strain HS1 / DAH).